A 721-amino-acid polypeptide reads, in one-letter code: Glucans biosynthesis glucosyltransferase H (721 aa).

The next 6 helical transmembrane spans lie at 53–75 (VLIM…QVLQ), 85–107 (VVLV…ALAG), 404–426 (GIGA…LISL), 456–478 (WVFA…LVLI), 490–512 (LRTF…VMMV), and 567–589 (WPLL…VALL).

The protein belongs to the glycosyltransferase 2 family. OpgH subfamily.

It localises to the cell inner membrane. Its pathway is glycan metabolism; osmoregulated periplasmic glucan (OPG) biosynthesis. Involved in the biosynthesis of osmoregulated periplasmic glucans (OPGs). This chain is Glucans biosynthesis glucosyltransferase H, found in Rhodopseudomonas palustris (strain ATCC BAA-98 / CGA009).